The following is a 1091-amino-acid chain: Self-sufficient cytochrome P450 monooxygenase CYP505E1 (1091 aa).

Heme is bound at residue cysteine 433. Positions 528-669 (ICFFYGSNSG…DLEAWEETSL (142 aa)) constitute a Flavodoxin-like domain. FMN-binding positions include 534–538 (SNSGT) and 613–645 (VFGC…TRLA). Residues 707 to 935 (KDLMEARVTT…RPAKEAFHLP (229 aa)) form the FAD-binding FR-type domain.

In the N-terminal section; belongs to the cytochrome P450 family. FAD is required as a cofactor. The cofactor is FMN. Heme serves as cofactor.

The catalysed reaction is 2 oxidized [cytochrome P450] + NADPH = 2 reduced [cytochrome P450] + NADP(+) + H(+). The enzyme catalyses an organic molecule + reduced [NADPH--hemoprotein reductase] + O2 = an alcohol + oxidized [NADPH--hemoprotein reductase] + H2O + H(+). It catalyses the reaction dodecanoate + reduced [NADPH--hemoprotein reductase] + O2 = 5-hydroxydodecanoate + oxidized [NADPH--hemoprotein reductase] + H2O + H(+). It carries out the reaction tetradecanoate + reduced [NADPH--hemoprotein reductase] + O2 = 7-hydroxytetradecanoate + oxidized [NADPH--hemoprotein reductase] + H2O + H(+). The catalysed reaction is dodecan-1-ol + reduced [NADPH--hemoprotein reductase] + O2 = 1,5-dodecanediol + oxidized [NADPH--hemoprotein reductase] + H2O + H(+). The enzyme catalyses dodecan-1-ol + reduced [NADPH--hemoprotein reductase] + O2 = 1,4-dodecanediol + oxidized [NADPH--hemoprotein reductase] + H2O + H(+). It catalyses the reaction dodecan-1-ol + reduced [NADPH--hemoprotein reductase] + O2 = 1,6-dodecanediol + oxidized [NADPH--hemoprotein reductase] + H2O + H(+). Functionally, self-sufficient cytochrome P450 monooxygenase that catalyzes the regioselective in-chain hydroxylation of alkanes, fatty alcohols, and fatty acids at the omega-7 position. Performs hydroxylation of C10-C16 n-alkanes and C12 and C14 fatty alcohols; and thereby enables the one step biocatalytic synthesis of rare alcohols such as 5-dodecanol and 7-tetradecanol. Converts 1-dodecanol into 1,5-dodecanediol as major product with very little sub-terminally hydroxylated products with the 1,4-dodecanediol and 1,6-dodecanediol more abundant. Converts dodecanoic acid to 5-hydroxydodecanoic acid which can be further converted into delta-dodecalactone by lactonization of the 5-hydroxy acid at low pH. Also gives sub-terminal hydroxylation of dodecanoic acid with 9-hydroxydodecanoic acid being the second most abundant product. The chain is Self-sufficient cytochrome P450 monooxygenase CYP505E1 from Aspergillus niger (strain ATCC MYA-4892 / CBS 513.88 / FGSC A1513).